A 121-amino-acid polypeptide reads, in one-letter code: Heimdall profilin (121 aa).

The protein belongs to the Asgard profilin family.

Its subcellular location is the cytoplasm. The protein resides in the cytoskeleton. Functionally, binds to actin and affects the structure of the cytoskeleton. At high concentrations inhibits spontaneous rabbit actin nucleation. This strongly suggests this archaea has a profilin-regulated actin system, and actin-type genes can be identified in this organism. The chain is Heimdall profilin from Heimdallarchaeota archaeon (strain LC_2).